We begin with the raw amino-acid sequence, 204 residues long: Crossover junction endodeoxyribonuclease RuvC (204 aa).

Residues aspartate 7, glutamate 68, and aspartate 141 contribute to the active site. Residues aspartate 7, glutamate 68, and aspartate 141 each coordinate Mg(2+).

The protein belongs to the RuvC family. In terms of assembly, homodimer which binds Holliday junction (HJ) DNA. The HJ becomes 2-fold symmetrical on binding to RuvC with unstacked arms; it has a different conformation from HJ DNA in complex with RuvA. In the full resolvosome a probable DNA-RuvA(4)-RuvB(12)-RuvC(2) complex forms which resolves the HJ. Mg(2+) is required as a cofactor.

Its subcellular location is the cytoplasm. It catalyses the reaction Endonucleolytic cleavage at a junction such as a reciprocal single-stranded crossover between two homologous DNA duplexes (Holliday junction).. Its function is as follows. The RuvA-RuvB-RuvC complex processes Holliday junction (HJ) DNA during genetic recombination and DNA repair. Endonuclease that resolves HJ intermediates. Cleaves cruciform DNA by making single-stranded nicks across the HJ at symmetrical positions within the homologous arms, yielding a 5'-phosphate and a 3'-hydroxyl group; requires a central core of homology in the junction. The consensus cleavage sequence is 5'-(A/T)TT(C/G)-3'. Cleavage occurs on the 3'-side of the TT dinucleotide at the point of strand exchange. HJ branch migration catalyzed by RuvA-RuvB allows RuvC to scan DNA until it finds its consensus sequence, where it cleaves and resolves the cruciform DNA. The polypeptide is Crossover junction endodeoxyribonuclease RuvC (Clavibacter sepedonicus (Clavibacter michiganensis subsp. sepedonicus)).